Here is a 435-residue protein sequence, read N- to C-terminus: Serine/threonine-protein kinase 40 (435 aa).

Positions 35-332 constitute a Protein kinase domain; that stretch reads FILGPRLGNS…DVLEALSAII (298 aa). Residues 41–49 and K66 contribute to the ATP site; that span reads LGNSPVPSI. The active-site Proton acceptor is D197.

The protein belongs to the protein kinase superfamily. CAMK Ser/Thr protein kinase family.

The protein localises to the nucleus. Its subcellular location is the cytoplasm. The enzyme catalyses L-seryl-[protein] + ATP = O-phospho-L-seryl-[protein] + ADP + H(+). It catalyses the reaction L-threonyl-[protein] + ATP = O-phospho-L-threonyl-[protein] + ADP + H(+). Functionally, may be a negative regulator of NF-kappa-B and p53-mediated gene transcription. The chain is Serine/threonine-protein kinase 40 (Stk40) from Rattus norvegicus (Rat).